We begin with the raw amino-acid sequence, 82 residues long: MRNIKMPKRVLQGVVISSKTDKTVTVKVERKFKHPIYKKFVKVSKKYAAHDIENKYREGDKVSIVESRPISKTKTWVVVNVE.

This sequence belongs to the universal ribosomal protein uS17 family. As to quaternary structure, part of the 30S ribosomal subunit.

Its function is as follows. One of the primary rRNA binding proteins, it binds specifically to the 5'-end of 16S ribosomal RNA. The protein is Small ribosomal subunit protein uS17 of Rickettsia typhi (strain ATCC VR-144 / Wilmington).